A 547-amino-acid chain; its full sequence is Methyl-accepting chemotaxis citrate transducer (547 aa).

Topologically, residues 1-5 are cytoplasmic; sequence MKNIK. Residues 6 to 29 form a helical membrane-spanning segment; sequence VITGVIATLGIFSALLLVTGILFY. The Periplasmic portion of the chain corresponds to 30–189; that stretch reads SAVSSDRLNF…ASDQNQSSFT (160 aa). Residues 190 to 213 form a helical membrane-spanning segment; that stretch reads QMQWTLGIILLIVLIVLAFIWLGL. The Cytoplasmic portion of the chain corresponds to 214–547; that stretch reads QRVLLRPLQR…AAEQANWESF (334 aa). One can recognise an HAMP domain in the interval 215–267; that stretch reads RVLLRPLQRIMAHIQTIADGDLTHEIEAEGRSEMGQLAAGLKTMQQSLIRTVS. Residues 272–501 enclose the Methyl-accepting transducer domain; the sequence is NADSIYTGAG…ESAAAAAALE (230 aa). Gln296 carries the glutamate methyl ester (Gln) modification. Position 303 is a glutamate methyl ester (Glu) (Glu303). A Glutamate methyl ester (Gln) modification is found at Gln310. The disordered stretch occupies residues 317–336; that stretch reads QNTDNARQATGLAKTASETA. Glutamate methyl ester (Glu) is present on residues Glu492 and Glu501. A disordered region spans residues 518 to 547; sequence KQPRREASPTTLSKGLTPQPAAEQANWESF.

It belongs to the methyl-accepting chemotaxis (MCP) protein family. Methylation level is increased by citrate and decreased by phenol.

It is found in the cell inner membrane. Functionally, acts as a receptor for citrate and mediates taxis away from phenol. Also mediates an attractant response to metal-citrate complexes. The polypeptide is Methyl-accepting chemotaxis citrate transducer (tcp) (Salmonella typhimurium (strain LT2 / SGSC1412 / ATCC 700720)).